The chain runs to 268 residues: Bis(5'-nucleosyl)-tetraphosphatase, symmetrical (268 aa).

This sequence belongs to the Ap4A hydrolase family.

The catalysed reaction is P(1),P(4)-bis(5'-adenosyl) tetraphosphate + H2O = 2 ADP + 2 H(+). In terms of biological role, hydrolyzes diadenosine 5',5'''-P1,P4-tetraphosphate to yield ADP. This chain is Bis(5'-nucleosyl)-tetraphosphatase, symmetrical, found in Vibrio parahaemolyticus serotype O3:K6 (strain RIMD 2210633).